The chain runs to 490 residues: Protein nucleotidyltransferase YdiU (490 aa).

Residues Gly89, Gly91, Arg92, Lys112, Asp124, Gly125, Arg175, and Arg182 each contribute to the ATP site. The active-site Proton acceptor is the Asp251. Positions 252 and 261 each coordinate Mg(2+). Asp261 provides a ligand contact to ATP.

It belongs to the SELO family. It depends on Mg(2+) as a cofactor. Mn(2+) is required as a cofactor.

The enzyme catalyses L-seryl-[protein] + ATP = 3-O-(5'-adenylyl)-L-seryl-[protein] + diphosphate. The catalysed reaction is L-threonyl-[protein] + ATP = 3-O-(5'-adenylyl)-L-threonyl-[protein] + diphosphate. It catalyses the reaction L-tyrosyl-[protein] + ATP = O-(5'-adenylyl)-L-tyrosyl-[protein] + diphosphate. It carries out the reaction L-histidyl-[protein] + UTP = N(tele)-(5'-uridylyl)-L-histidyl-[protein] + diphosphate. The enzyme catalyses L-seryl-[protein] + UTP = O-(5'-uridylyl)-L-seryl-[protein] + diphosphate. The catalysed reaction is L-tyrosyl-[protein] + UTP = O-(5'-uridylyl)-L-tyrosyl-[protein] + diphosphate. In terms of biological role, nucleotidyltransferase involved in the post-translational modification of proteins. It can catalyze the addition of adenosine monophosphate (AMP) or uridine monophosphate (UMP) to a protein, resulting in modifications known as AMPylation and UMPylation. The chain is Protein nucleotidyltransferase YdiU from Vibrio vulnificus (strain YJ016).